We begin with the raw amino-acid sequence, 125 residues long: Small ribosomal subunit protein eS8 (125 aa).

The tract at residues 1-20 (MLWQGESIRKVTGGRRRPAQ) is disordered.

This sequence belongs to the eukaryotic ribosomal protein eS8 family. Part of the 30S ribosomal subunit.

The sequence is that of Small ribosomal subunit protein eS8 from Methanoregula boonei (strain DSM 21154 / JCM 14090 / 6A8).